Here is a 293-residue protein sequence, read N- to C-terminus: Pyridoxal 5'-phosphate synthase subunit PdxS (293 aa).

Asp23 is a binding site for D-ribose 5-phosphate. Lys80 acts as the Schiff-base intermediate with D-ribose 5-phosphate in catalysis. D-ribose 5-phosphate is bound at residue Gly152. Residue Arg164 coordinates D-glyceraldehyde 3-phosphate. Residues Gly213 and 234–235 each bind D-ribose 5-phosphate; that span reads GS.

This sequence belongs to the PdxS/SNZ family. As to quaternary structure, in the presence of PdxT, forms a dodecamer of heterodimers.

It catalyses the reaction aldehydo-D-ribose 5-phosphate + D-glyceraldehyde 3-phosphate + L-glutamine = pyridoxal 5'-phosphate + L-glutamate + phosphate + 3 H2O + H(+). The protein operates within cofactor biosynthesis; pyridoxal 5'-phosphate biosynthesis. Its function is as follows. Catalyzes the formation of pyridoxal 5'-phosphate from ribose 5-phosphate (RBP), glyceraldehyde 3-phosphate (G3P) and ammonia. The ammonia is provided by the PdxT subunit. Can also use ribulose 5-phosphate and dihydroxyacetone phosphate as substrates, resulting from enzyme-catalyzed isomerization of RBP and G3P, respectively. This is Pyridoxal 5'-phosphate synthase subunit PdxS from Niallia circulans (Bacillus circulans).